The chain runs to 111 residues: Exocrine gland-secreted peptide 22 (111 aa).

A signal peptide spans 1-24; the sequence is MNSVPVMLFSISILLAAMLTEGRG.

It belongs to the exocrine gland-secreted peptide family. Expressed in acinar cells of the lacrimal gland from where it is secreted into tears. Not detected in a range of other tissues tested including other exocrine glands, internal organs and sensory epithelia.

The protein localises to the secreted. Its function is as follows. Pheromone produced by juveniles which activates a small number of vomeronasal organ sensory neurons and exhibits a powerful inhibitory effect on adult male mating behavior. In Mus musculus (Mouse), this protein is Exocrine gland-secreted peptide 22.